Reading from the N-terminus, the 1574-residue chain is RNA2 polyprotein (1574 aa).

A coiled-coil region spans residues 361–422 (ERVKAFSSHH…ERLRAAKEDR (62 aa)). Disordered regions lie at residues 557–579 (PPPI…ETPG) and 863–916 (RSAT…RGYT).

Specific enzymatic cleavages by RNA1 encoded picornain 3C-like protease in vivo yield mature proteins.

Its subcellular location is the host cell junction. It localises to the host plasmodesma. The protein localises to the virion. In terms of biological role, transports viral genome to neighboring plant cells directly through plasmosdesmata, without any budding. The movement protein allows efficient cell to cell propagation, by bypassing the host cell wall barrier. Acts by forming a tubular structure at the host plasmodesmata, enlarging it enough to allow free passage of virion capsids. Functionally, capsid proteins form a capsid enclosing the viral positive strand RNA genome. Together they form an icosahedral capsid pseudo T=3 with a diameter of approximately 30 nm (Potential). The chain is RNA2 polyprotein from Citrus unshiu (Satsuma mandarin).